The following is a 77-amino-acid chain: Metallocarboxypeptidase inhibitor (77 aa).

The signal sequence occupies residues M1–F32. The residue at position 33 (Q33) is a Pyrrolidone carboxylic acid. Cystine bridges form between C39–C55, C43–C58, and C49–C65. Residues G70 to V77 constitute a propeptide, hydrophobic peptide.

It to potato MCPI. In terms of tissue distribution, ovaries.

In terms of biological role, may play a defensive role against insect attacks. The chain is Metallocarboxypeptidase inhibitor from Solanum lycopersicum (Tomato).